We begin with the raw amino-acid sequence, 428 residues long: Gamma-glutamyl phosphate reductase (428 aa).

The protein belongs to the gamma-glutamyl phosphate reductase family.

The protein resides in the cytoplasm. The catalysed reaction is L-glutamate 5-semialdehyde + phosphate + NADP(+) = L-glutamyl 5-phosphate + NADPH + H(+). Its pathway is amino-acid biosynthesis; L-proline biosynthesis; L-glutamate 5-semialdehyde from L-glutamate: step 2/2. Functionally, catalyzes the NADPH-dependent reduction of L-glutamate 5-phosphate into L-glutamate 5-semialdehyde and phosphate. The product spontaneously undergoes cyclization to form 1-pyrroline-5-carboxylate. In Treponema pallidum (strain Nichols), this protein is Gamma-glutamyl phosphate reductase.